The sequence spans 229 residues: MINHPEIIVIFPAAGIGKRMGYKYPKQYIKIKNKTILEHSISLFIDKIYVKKILIAINKKDYWFNKLSILKNKKINIVIGGKSRTESVISALKFVSKVDWVLVHDAVRPCLHKNDLNKLLKVINISPFGAILAAPIYDTVKKSYGNFISHTIKRNKLWRALTPQLFNLKILINCLKIITSKGEIITDESSALEKCGYKLNLVHGRSDNIKITYPEDLNFANFFINNIKE.

This sequence belongs to the IspD/TarI cytidylyltransferase family. IspD subfamily. As to quaternary structure, homodimer.

It catalyses the reaction 2-C-methyl-D-erythritol 4-phosphate + CTP + H(+) = 4-CDP-2-C-methyl-D-erythritol + diphosphate. It participates in isoprenoid biosynthesis; isopentenyl diphosphate biosynthesis via DXP pathway; isopentenyl diphosphate from 1-deoxy-D-xylulose 5-phosphate: step 2/6. Functionally, catalyzes the formation of 4-diphosphocytidyl-2-C-methyl-D-erythritol from CTP and 2-C-methyl-D-erythritol 4-phosphate (MEP). The protein is 2-C-methyl-D-erythritol 4-phosphate cytidylyltransferase of Wigglesworthia glossinidia brevipalpis.